Consider the following 446-residue polypeptide: Phosphoglucosamine mutase (446 aa).

Ser101 acts as the Phosphoserine intermediate in catalysis. Mg(2+) is bound by residues Ser101, Asp240, Asp242, and Asp244. Ser101 is modified (phosphoserine).

The protein belongs to the phosphohexose mutase family. It depends on Mg(2+) as a cofactor. In terms of processing, activated by phosphorylation.

It carries out the reaction alpha-D-glucosamine 1-phosphate = D-glucosamine 6-phosphate. In terms of biological role, catalyzes the conversion of glucosamine-6-phosphate to glucosamine-1-phosphate. This chain is Phosphoglucosamine mutase, found in Pseudomonas putida (strain ATCC 47054 / DSM 6125 / CFBP 8728 / NCIMB 11950 / KT2440).